The sequence spans 747 residues: Asparagine synthetase [glutamine-hydrolyzing] 2 (747 aa).

Cys2 functions as the For GATase activity in the catalytic mechanism. One can recognise a Glutamine amidotransferase type-2 domain in the interval 2 to 218 (CGLAGIINLA…AGHYLEINLT (217 aa)). L-glutamine contacts are provided by residues 52–56 (RLSIL), 77–79 (NGE), and Asp100. An ATP-binding site is contributed by 395-396 (SP).

Belongs to the asparagine synthetase family.

It catalyses the reaction L-aspartate + L-glutamine + ATP + H2O = L-asparagine + L-glutamate + AMP + diphosphate + H(+). It functions in the pathway amino-acid biosynthesis; L-asparagine biosynthesis; L-asparagine from L-aspartate (L-Gln route): step 1/1. In Bacillus subtilis (strain 168), this protein is Asparagine synthetase [glutamine-hydrolyzing] 2 (asnH).